The primary structure comprises 369 residues: tRNA 2-selenouridine synthase (369 aa).

The region spanning 15 to 138 (MLSGHPMMDV…MRQYLIEVID (124 aa)) is the Rhodanese domain. Cys98 serves as the catalytic S-selanylcysteine intermediate.

It belongs to the SelU family. In terms of assembly, monomer.

The enzyme catalyses 5-methylaminomethyl-2-thiouridine(34) in tRNA + selenophosphate + (2E)-geranyl diphosphate + H2O + H(+) = 5-methylaminomethyl-2-selenouridine(34) in tRNA + (2E)-thiogeraniol + phosphate + diphosphate. It catalyses the reaction 5-methylaminomethyl-2-thiouridine(34) in tRNA + (2E)-geranyl diphosphate = 5-methylaminomethyl-S-(2E)-geranyl-thiouridine(34) in tRNA + diphosphate. It carries out the reaction 5-methylaminomethyl-S-(2E)-geranyl-thiouridine(34) in tRNA + selenophosphate + H(+) = 5-methylaminomethyl-2-(Se-phospho)selenouridine(34) in tRNA + (2E)-thiogeraniol. The catalysed reaction is 5-methylaminomethyl-2-(Se-phospho)selenouridine(34) in tRNA + H2O = 5-methylaminomethyl-2-selenouridine(34) in tRNA + phosphate. Functionally, involved in the post-transcriptional modification of the uridine at the wobble position (U34) of tRNA(Lys), tRNA(Glu) and tRNA(Gln). Catalyzes the conversion of 2-thiouridine (S2U-RNA) to 2-selenouridine (Se2U-RNA). Acts in a two-step process involving geranylation of 2-thiouridine (S2U) to S-geranyl-2-thiouridine (geS2U) and subsequent selenation of the latter derivative to 2-selenouridine (Se2U) in the tRNA chain. This chain is tRNA 2-selenouridine synthase, found in Shewanella sediminis (strain HAW-EB3).